The chain runs to 206 residues: Ran-specific GTPase-activating protein (206 aa).

Basic and acidic residues predominate over residues 1–26 (MAAAKDTHEDHDTSTENADESNHDPQ). The interval 1–33 (MAAAKDTHEDHDTSTENADESNHDPQFEPIVSL) is disordered. Ala-2 carries the post-translational modification N-acetylalanine. Phosphothreonine is present on Thr-13. Ser-21 and Ser-60 each carry phosphoserine. The RanBD1 domain occupies 26–164 (QFEPIVSLPE…FEECRKEIEE (139 aa)). N6-acetyllysine; alternate is present on Lys-150. Lys-150 is modified (N6-succinyllysine; alternate). Residues 162–184 (IEEKEKKGSGKNDSTEKVVEKLE) are compositionally biased toward basic and acidic residues. The tract at residues 162-206 (IEEKEKKGSGKNDSTEKVVEKLEALSVQEGEQPQDAAPAAVEEEQ) is disordered. An N6-acetyllysine modification is found at Lys-182. Ser-187 is subject to Phosphoserine.

It belongs to the RANBP1 family. In terms of assembly, interacts with RAN (via C-terminus of GTP-bound form) but not with GDP-bound RAN. Identified in a complex composed of RAN, RANGAP1 and RANBP1. Identified in a complex that contains TNPO1, RAN and RANBP1. Identified in a complex that contains CSE1L, KPNA2, RAN and RANBP1. Identified in a complex with nucleotide-free RAN and RCC1.

Functionally, plays a role in RAN-dependent nucleocytoplasmic transport. Alleviates the TNPO1-dependent inhibition of RAN GTPase activity and mediates the dissociation of RAN from proteins involved in transport into the nucleus. Induces a conformation change in the complex formed by XPO1 and RAN that triggers the release of the nuclear export signal of cargo proteins. Promotes the disassembly of the complex formed by RAN and importin beta. Promotes dissociation of RAN from a complex with KPNA2 and CSE1L. Required for normal mitotic spindle assembly and normal progress through mitosis via its effect on RAN. Does not increase the RAN GTPase activity by itself, but increases GTP hydrolysis mediated by RANGAP1. Inhibits RCC1-dependent exchange of RAN-bound GDP by GTP. This Bos taurus (Bovine) protein is Ran-specific GTPase-activating protein (RANBP1).